The sequence spans 268 residues: Speedy protein E4A (268 aa).

2 disordered regions span residues 1–26 (MGEGTPGVDSARVQEEGGRDQSLGFV) and 43–97 (LCSE…LDSE). Positions 43 to 52 (LCSEEQSPQP) are enriched in polar residues. Positions 134–265 (PEHHKVFTKL…DLWVWARDRT (132 aa)) are speedy/Ringo box; Required for CDK-binding.

This sequence belongs to the Speedy/Ringo family. As to quaternary structure, interacts with CDK1. Does not interact with CDK2 in vivo. In terms of tissue distribution, testis-specific.

It localises to the nucleus. Promotes progression through the cell cycle via binding and activation of CDK1. The sequence is that of Speedy protein E4A from Mus musculus (Mouse).